The primary structure comprises 318 residues: NAD kinase (318 aa).

The active-site Proton acceptor is Asp-80. Residues 80 to 81, Arg-85, 155 to 156, Asp-185, and 196 to 201 each bind NAD(+); these read DG, NE, and TAYAFS.

This sequence belongs to the NAD kinase family. Requires a divalent metal cation as cofactor.

It localises to the cytoplasm. It carries out the reaction NAD(+) + ATP = ADP + NADP(+) + H(+). Its function is as follows. Involved in the regulation of the intracellular balance of NAD and NADP, and is a key enzyme in the biosynthesis of NADP. Catalyzes specifically the phosphorylation on 2'-hydroxyl of the adenosine moiety of NAD to yield NADP. This is NAD kinase from Corynebacterium efficiens (strain DSM 44549 / YS-314 / AJ 12310 / JCM 11189 / NBRC 100395).